A 972-amino-acid chain; its full sequence is POM121-like protein 2 (972 aa).

Disordered stretches follow at residues 1-67 (MGSY…PANP), 281-302 (LKKA…SGQL), 328-359 (TEED…IPEM), 406-431 (GISS…PVTD), 676-726 (LGLS…AIDG), and 953-972 (SKTL…TYKK). A compositionally biased stretch (basic residues) spans 40-57 (RVQHVHRAQPARRHRPAR). 2 stretches are compositionally biased toward polar residues: residues 287–302 (SPNS…SGQL) and 339–352 (VPSN…TGTA). Residues 413–431 (PSIASTQASPSSPTTPVTD) are compositionally biased toward low complexity. Residues 677–696 (GLSSTNQPPVTSSNSNVTSA) show a composition bias toward polar residues. Over residues 697–706 (LTSSLGSSPK) the composition is skewed to low complexity.

This sequence belongs to the POM121 family.

This Mus musculus (Mouse) protein is POM121-like protein 2 (Pom121l2).